The primary structure comprises 432 residues: Transcriptional adapter 3 (432 aa).

Lys21 participates in a covalent cross-link: Glycyl lysine isopeptide (Lys-Gly) (interchain with G-Cter in SUMO2). Residues 40–69 (IEELDTLQLELETLLSSASRRLRVLEAETQ) adopt a coiled-coil conformation. Residues 87-127 (GRDHELGAPPKHGKPKKQKLEGKAGHGPGPGPGRPKSKNLQ) form a disordered region. Lys129 participates in a covalent cross-link: Glycyl lysine isopeptide (Lys-Gly) (interchain with G-Cter in SUMO2). Composition is skewed to basic and acidic residues over residues 211-223 (DGARAAAVADKKK) and 232-251 (LDTKDVDALPKKSEAQHEQP). Disordered stretches follow at residues 211 to 257 (DGAR…GCPF) and 271 to 319 (ENII…SRIK). Phosphoserine is present on residues Ser280 and Ser298. Residues 295-305 (ASTSPRNQNKP) show a composition bias toward polar residues. A coiled-coil region spans residues 367–407 (LLRLAKEEVSRQELRQRVRMADNEVMDAFRKIMAARQKKRT). The residue at position 418 (Lys418) is an N6-acetyllysine.

It belongs to the NGG1 family. As to quaternary structure, the PCAF complex is composed of a number of TBP-associated factors (TAFS), such as TAF5, TAF5L, TAF6, TAF6L, TAF9, TAF10 and TAF12, PCAF, and also PCAF-associated factors (PAFs), such as TADA2L/ADA2, TADA3L/ADA3 and SPT3. Interacts directly with TADA2L and PCAF and also with the high-risk HPV oncoprotein E6. Component of the STAGA transcription coactivator-HAT complex, at least composed of SUPT3H, GCN5L2, TAF5L, TAF6L, SUPT7L, TADA3L, TAD1L, TAF10, TAF12, TRRAP and TAF9. Component of the TFTC-HAT complex. Component of the ADA2A-containing complex (ATAC), composed of KAT14, KAT2A, TADA2L, TADA3L, ZZ3, MBIP, WDR5, YEATS2, CCDC101 and DR1.

The protein resides in the nucleus. Functions as a component of the PCAF complex. The PCAF complex is capable of efficiently acetylating histones in a nucleosomal context. The PCAF complex could be considered as the human version of the yeast SAGA complex. Also known as a coactivator for p53/TP53-dependent transcriptional activation. Component of the ATAC complex, a complex with histone acetyltransferase activity on histones H3 and H4. The polypeptide is Transcriptional adapter 3 (TADA3) (Pongo abelii (Sumatran orangutan)).